The primary structure comprises 239 residues: Probable 2-phosphosulfolactate phosphatase (239 aa).

Belongs to the ComB family. It depends on Mg(2+) as a cofactor.

The enzyme catalyses (2R)-O-phospho-3-sulfolactate + H2O = (2R)-3-sulfolactate + phosphate. The chain is Probable 2-phosphosulfolactate phosphatase from Clostridium botulinum (strain Loch Maree / Type A3).